The sequence spans 476 residues: Proton-coupled amino acid transporter 1 (476 aa).

The span at 1–15 (MSTQRLRNEDYHDYS) shows a compositional bias: basic and acidic residues. The segment at 1–32 (MSTQRLRNEDYHDYSSTDVSPEESPSEGLNNL) is disordered. The Cytoplasmic segment spans residues 1–51 (MSTQRLRNEDYHDYSSTDVSPEESPSEGLNNLSSPGSYQRFGQSNSTTWFQ). The helical transmembrane segment at 52-72 (TLIHLLKGNIGTGLLGLPLAV) threads the bilayer. Residues 73 to 78 (KNAGIV) are Extracellular-facing. A helical transmembrane segment spans residues 79 to 99 (MGPISLLIIGIVAVHCMGILV). The Cytoplasmic segment spans residues 100-141 (KCAHHFCRRLNKSFVDYGDTVMYGLESSPCSWLRNHAHWGRR). The chain crosses the membrane as a helical span at residues 142–162 (VVDFFLIVTQLGFCCVYFVFL). Residues 163–190 (ADNFKQVIEAANGTTNNCHNNETVILTP) lie on the Extracellular side of the membrane. N-linked (GlcNAc...) asparagine glycans are attached at residues N174 and N183. C180 and C329 are joined by a disulfide. A helical membrane pass occupies residues 191-211 (TMDSRLYMLSFLPFLVLLVFI). Topologically, residues 212 to 215 (RNLR) are cytoplasmic. A helical transmembrane segment spans residues 216-236 (ALSIFSLLANITMLVSLVMIY). At 237–257 (QFIVQRIPDPSHLPLVAPWKT) the chain is on the extracellular side. A helical transmembrane segment spans residues 258–278 (YPLFFGTAIFSFEGIGMVLPL). Over 279-289 (ENKMKDPRKFP) the chain is Cytoplasmic. Residues 290-310 (LILYLGMVIVTILYISLGCLG) form a helical membrane-spanning segment. Residues 311–342 (YLQFGANIQGSITLNLPNCWLYQSVKLLYSIG) are Extracellular-facing. Residues 343 to 363 (IFFTYALQFYVPAEIIIPFFV) traverse the membrane as a helical segment. The Cytoplasmic portion of the chain corresponds to 364 to 372 (SRAPEHCEL). The helical transmembrane segment at 373 to 393 (VVDLFVRTVLVCLTCILAILI) threads the bilayer. The Extracellular portion of the chain corresponds to 394 to 397 (PRLD). Residues 398–418 (LVISLVGSVSSSALALIIPPL) form a helical membrane-spanning segment. At 419–439 (LEVTTFYSEGMSPLTIFKDAL) the chain is on the cytoplasmic side. The helical transmembrane segment at 440–460 (ISILGFVGFVVGTYEALYELI) threads the bilayer. The Extracellular portion of the chain corresponds to 461–476 (QPSNAPIFINSTCAFI). N470 carries an N-linked (GlcNAc...) asparagine glycan.

Belongs to the amino acid/polyamine transporter 2 family.

It localises to the cell membrane. Its subcellular location is the apical cell membrane. The protein localises to the lysosome membrane. The catalysed reaction is glycine(in) + H(+)(in) = glycine(out) + H(+)(out). It catalyses the reaction L-alanine(in) + H(+)(in) = L-alanine(out) + H(+)(out). The enzyme catalyses D-alanine(in) + H(+)(in) = D-alanine(out) + H(+)(out). It carries out the reaction L-proline(out) + H(+)(out) = L-proline(in) + H(+)(in). The catalysed reaction is D-proline(out) + H(+)(out) = D-proline(in) + H(+)(in). It catalyses the reaction D-serine(out) + H(+)(out) = D-serine(in) + H(+)(in). The enzyme catalyses L-serine(in) + H(+)(in) = L-serine(out) + H(+)(out). It carries out the reaction 4-aminobutanoate(in) + H(+)(in) = 4-aminobutanoate(out) + H(+)(out). The catalysed reaction is beta-alanine(in) + H(+)(in) = beta-alanine(out) + H(+)(out). Electrogenic proton/amino acid symporter with selectivity for small apolar L-amino acids, their D-enantiomers and selected amino acid derivatives such as 4-aminobutanoate/GABA. May be involved in the efflux from the lysosomal compartment of neutral amino acids resulting from proteolysis. May play a role in specifying sites for exocytosis in neurons. This chain is Proton-coupled amino acid transporter 1, found in Homo sapiens (Human).